Here is a 453-residue protein sequence, read N- to C-terminus: Aldehyde dehydrogenase, dimeric NADP-preferring (453 aa).

The residue at position 2 (serine 2) is an N-acetylserine. Lysine 178 bears the N6-acetyllysine mark. 188 to 193 (GSTGVG) serves as a coordination point for NAD(+). Position 194 is an N6-acetyllysine (lysine 194). Residues glutamate 210 and cysteine 244 contribute to the active site.

This sequence belongs to the aldehyde dehydrogenase family. In terms of assembly, homodimer. High levels in stomach, esophagus and lung; low level in the liver and kidney.

The protein resides in the cytoplasm. The enzyme catalyses an aldehyde + NAD(+) + H2O = a carboxylate + NADH + 2 H(+). The catalysed reaction is octanal + NAD(+) + H2O = octanoate + NADH + 2 H(+). Functionally, ALDHs play a major role in the detoxification of alcohol-derived acetaldehyde. They are involved in the metabolism of corticosteroids, biogenic amines, neurotransmitters, and lipid peroxidation. Oxidizes medium and long chain aldehydes into non-toxic fatty acids. Preferentially oxidizes aromatic aldehyde substrates. Comprises about 50 percent of corneal epithelial soluble proteins. May play a role in preventing corneal damage caused by ultraviolet light. This is Aldehyde dehydrogenase, dimeric NADP-preferring (ALDH3A1) from Homo sapiens (Human).